The chain runs to 688 residues: DNA ligase (688 aa).

NAD(+)-binding positions include 38-42 (DEEYD), 87-88 (SL), and glutamate 118. The N6-AMP-lysine intermediate role is filled by lysine 120. Residues arginine 141, glutamate 175, lysine 291, and lysine 315 each contribute to the NAD(+) site. Zn(2+) contacts are provided by cysteine 409, cysteine 412, cysteine 428, and cysteine 433. A BRCT domain is found at 590–679 (MKLDILKGLT…AELKGYNFDE (90 aa)).

This sequence belongs to the NAD-dependent DNA ligase family. LigA subfamily. It depends on Mg(2+) as a cofactor. Requires Mn(2+) as cofactor.

The enzyme catalyses NAD(+) + (deoxyribonucleotide)n-3'-hydroxyl + 5'-phospho-(deoxyribonucleotide)m = (deoxyribonucleotide)n+m + AMP + beta-nicotinamide D-nucleotide.. Its function is as follows. DNA ligase that catalyzes the formation of phosphodiester linkages between 5'-phosphoryl and 3'-hydroxyl groups in double-stranded DNA using NAD as a coenzyme and as the energy source for the reaction. It is essential for DNA replication and repair of damaged DNA. This chain is DNA ligase, found in Thermotoga petrophila (strain ATCC BAA-488 / DSM 13995 / JCM 10881 / RKU-1).